Here is a 261-residue protein sequence, read N- to C-terminus: MFSPLTDLSRARILLSNDDGFEAEGLAVLERVARTLSDDVWIVAPETEQSGAGHALTIHDPLRFRARGEKRFSVRGTPTDCVLVAVNHLMDRPPDLVVSGINRGGNLGEDVHYSGTVAAAMEGTLLGLRAIALSQVFETNGTGIADPFQVAATHASDVIRRVCGRPWNRQVLINVNFPDCPLDAVTGIELKRQGRRKMGDDIEERRDPRDRPYLWIGAQRKEDRKTAGTDMEAISRGAITVTPLCVDMTDLPTIEALTGAF.

A divalent metal cation contacts are provided by D18, D19, S50, and N102.

This sequence belongs to the SurE nucleotidase family. The cofactor is a divalent metal cation.

It is found in the cytoplasm. It catalyses the reaction a ribonucleoside 5'-phosphate + H2O = a ribonucleoside + phosphate. In terms of biological role, nucleotidase that shows phosphatase activity on nucleoside 5'-monophosphates. In Rhodospirillum rubrum (strain ATCC 11170 / ATH 1.1.1 / DSM 467 / LMG 4362 / NCIMB 8255 / S1), this protein is 5'-nucleotidase SurE.